A 151-amino-acid polypeptide reads, in one-letter code: Protein SprT-like (151 aa).

One can recognise a SprT-like domain in the interval 7–146 (QSLTESIAIK…CGRCGGILKL (140 aa)). His-67 provides a ligand contact to Zn(2+). Glu-68 is an active-site residue. His-71 contacts Zn(2+).

The protein belongs to the SprT family. Zn(2+) is required as a cofactor.

It localises to the cytoplasm. This Staphylococcus epidermidis (strain ATCC 35984 / DSM 28319 / BCRC 17069 / CCUG 31568 / BM 3577 / RP62A) protein is Protein SprT-like.